The following is a 497-amino-acid chain: Probable pectinesterase 30 (497 aa).

The N-terminal stretch at 1-21 (MLVKVFSFFILMIIMVIGVSK) is a signal peptide. N-linked (GlcNAc...) asparagine glycans are attached at residues Asn238 and Asn254. Residue Thr263 participates in substrate binding. Residue Asp316 is the Proton donor of the active site. A disulfide bridge connects residues Cys330 and Cys350. Residue Asp337 is the Nucleophile of the active site. N-linked (GlcNAc...) asparagine glycosylation occurs at Asn385. Substrate contacts are provided by Arg403 and Trp405.

Belongs to the pectinesterase family. Expressed in siliques.

The protein localises to the secreted. Its subcellular location is the cell wall. The catalysed reaction is [(1-&gt;4)-alpha-D-galacturonosyl methyl ester](n) + n H2O = [(1-&gt;4)-alpha-D-galacturonosyl](n) + n methanol + n H(+). It participates in glycan metabolism; pectin degradation; 2-dehydro-3-deoxy-D-gluconate from pectin: step 1/5. In terms of biological role, acts in the modification of cell walls via demethylesterification of cell wall pectin. This is Probable pectinesterase 30 (PME30) from Arabidopsis thaliana (Mouse-ear cress).